Consider the following 190-residue polypeptide: Segregation and condensation protein B (190 aa).

This sequence belongs to the ScpB family. Homodimer. Homodimerization may be required to stabilize the binding of ScpA to the Smc head domains. Component of a cohesin-like complex composed of ScpA, ScpB and the Smc homodimer, in which ScpA and ScpB bind to the head domain of Smc. The presence of the three proteins is required for the association of the complex with DNA.

Its subcellular location is the cytoplasm. Participates in chromosomal partition during cell division. May act via the formation of a condensin-like complex containing Smc and ScpA that pull DNA away from mid-cell into both cell halves. In Bacillus thuringiensis subsp. konkukian (strain 97-27), this protein is Segregation and condensation protein B.